The chain runs to 434 residues: ATP-dependent RNA helicase RhlB (434 aa).

The Q motif motif lies at 9 to 37 (QKFADLGLEPQVLDGLNAKGFINCTPIQA). The 180-residue stretch at 40–219 (LPVLLAGQDI…FEHMQEPEHV (180 aa)) folds into the Helicase ATP-binding domain. An ATP-binding site is contributed by 53–60 (AQTGTGKT). Positions 165-168 (DEAD) match the DEAD box motif. Residues 245 to 390 (ALLQTLIEEE…QSDYDTSALL (146 aa)) enclose the Helicase C-terminal domain. The interval 394–434 (PAPIRLQRRPPQNRRNGSNNGQRQSGNRKHSRPRPPRSPQA) is disordered. Over residues 406–418 (NRRNGSNNGQRQS) the composition is skewed to low complexity. Over residues 419–428 (GNRKHSRPRP) the composition is skewed to basic residues.

This sequence belongs to the DEAD box helicase family. RhlB subfamily. As to quaternary structure, component of the RNA degradosome, which is a multiprotein complex involved in RNA processing and mRNA degradation.

It is found in the cytoplasm. The enzyme catalyses ATP + H2O = ADP + phosphate + H(+). In terms of biological role, DEAD-box RNA helicase involved in RNA degradation. Has RNA-dependent ATPase activity and unwinds double-stranded RNA. This chain is ATP-dependent RNA helicase RhlB, found in Aliivibrio salmonicida (strain LFI1238) (Vibrio salmonicida (strain LFI1238)).